A 78-amino-acid polypeptide reads, in one-letter code: Large ribosomal subunit protein bL28 (78 aa).

A disordered region spans residues Met1–Asn26.

This sequence belongs to the bacterial ribosomal protein bL28 family.

The sequence is that of Large ribosomal subunit protein bL28 from Corynebacterium jeikeium (strain K411).